A 146-amino-acid chain; its full sequence is Large ribosomal subunit protein uL15 (146 aa).

The segment at 1 to 51 (MKLHELQPAAGSRKVRNRVGRGTSSGNGKTSGRGQKGQKARSGGGVRLGFE) is disordered. Gly residues-rich tracts occupy residues 23 to 35 (TSSG…GRGQ) and 42 to 51 (SGGGVRLGFE).

Belongs to the universal ribosomal protein uL15 family. As to quaternary structure, part of the 50S ribosomal subunit.

Its function is as follows. Binds to the 23S rRNA. This Streptococcus sanguinis (strain SK36) protein is Large ribosomal subunit protein uL15.